Consider the following 485-residue polypeptide: Aspartyl/glutamyl-tRNA(Asn/Gln) amidotransferase subunit B (485 aa).

Belongs to the GatB/GatE family. GatB subfamily. As to quaternary structure, heterotrimer of A, B and C subunits.

It catalyses the reaction L-glutamyl-tRNA(Gln) + L-glutamine + ATP + H2O = L-glutaminyl-tRNA(Gln) + L-glutamate + ADP + phosphate + H(+). It carries out the reaction L-aspartyl-tRNA(Asn) + L-glutamine + ATP + H2O = L-asparaginyl-tRNA(Asn) + L-glutamate + ADP + phosphate + 2 H(+). Its function is as follows. Allows the formation of correctly charged Asn-tRNA(Asn) or Gln-tRNA(Gln) through the transamidation of misacylated Asp-tRNA(Asn) or Glu-tRNA(Gln) in organisms which lack either or both of asparaginyl-tRNA or glutaminyl-tRNA synthetases. The reaction takes place in the presence of glutamine and ATP through an activated phospho-Asp-tRNA(Asn) or phospho-Glu-tRNA(Gln). This is Aspartyl/glutamyl-tRNA(Asn/Gln) amidotransferase subunit B from Paramagnetospirillum magneticum (strain ATCC 700264 / AMB-1) (Magnetospirillum magneticum).